Here is an 862-residue protein sequence, read N- to C-terminus: Rho guanine nucleotide exchange factor 7 (862 aa).

One can recognise a Calponin-homology (CH) domain in the interval 1 to 112 (MNSAEQTVTW…SLVTLNKVTA (112 aa)). A phosphoserine mark is found at S132, S155, S164, S228, and S236. An SH3 domain is found at 163–222 (NSQLVVRAKFNFQQTNEDELSFSKGDVIHVTRVEEGGWWEGTHNGRTGWFPSNYVREIKP). Residues 250 to 430 (YYNVVLQNIL…KNLSAQCQEV (181 aa)) enclose the DH domain. The region spanning 452-557 (DIKTLGSVTY…WVEHLQKQTK (106 aa)) is the PH domain. S497 is subject to Phosphoserine. 3 disordered regions span residues 559–591 (TSVS…ADSK), 657–679 (KTMK…EFAV), and 728–748 (DQSS…EPSD). The span at 572-585 (PSHTLPSHPLTPSS) shows a compositional bias: polar residues. A compositionally biased stretch (basic residues) spans 657–669 (KTMKKLLPKRKPE). Over residues 670–679 (RKPSDEEFAV) the composition is skewed to basic and acidic residues. Residue S673 is modified to Phosphoserine. Low complexity predominate over residues 731-744 (SLDSLGRRSSLSRL). S776 carries the post-translational modification Phosphoserine. A coiled-coil region spans residues 804–854 (KSLVDTVYALKDEVQELRQDNKKMKKSLEEEQRARKDLEKLVRKVLKNMND).

As to quaternary structure, interacts with PAK kinases through the SH3 domain. Interacts with unphosphorylated PAK1. Interacts with ITCH. Interacts with SCRIB; interaction is direct and may play a role in regulation of apoptosis. Interacts with GIT1 and TGFB1I1. Interacts with FRMPD4 (via N-terminus). Interacts with CaMK1. Interacts with BIN2. Interacts with PTK2/FAK1 and RAC1. Interacts with PARVB. Interacts with YWHAZ. Interacts (via PH domain) with NOX1 (via FAD-binding FR-type domain). Phosphorylated on Ser-673 by CaMK1; enhancement of GEF activity and downstream activation of RAC1. Phosphorylated by PTK2/FAK1; this promotes interaction with RAC1. Seems to be expressed in the central nervous system. Isoform B, isoform C and isoform E are expressed with highest levels in brain and testis.

It localises to the cell junction. The protein resides in the focal adhesion. The protein localises to the cell projection. It is found in the ruffle. Its subcellular location is the cytoplasm. It localises to the cell cortex. The protein resides in the lamellipodium. Its function is as follows. Acts as a RAC1 guanine nucleotide exchange factor (GEF) and can induce membrane ruffling. May function as a positive regulator of apoptosis. Functions in cell migration, attachment and cell spreading. Promotes targeting of RAC1 to focal adhesions. Downstream of NMDA receptors and CaMKK-CaMK1 signaling cascade, promotes the formation of spines and synapses in hippocampal neurons. The protein is Rho guanine nucleotide exchange factor 7 (Arhgef7) of Mus musculus (Mouse).